Reading from the N-terminus, the 557-residue chain is Venom carboxylesterase-6 (557 aa).

An N-terminal signal peptide occupies residues Met1–Gln21. An intrachain disulfide couples Cys88 to Cys108. Asn145 carries N-linked (GlcNAc...) asparagine glycosylation. The active-site Acyl-ester intermediate is the Ser212. A disulfide bridge connects residues Cys264 and Cys275. The active-site Charge relay system is Glu341. A glycan (N-linked (GlcNAc...) asparagine) is linked at Asn374. The active-site Charge relay system is the His464. N-linked (GlcNAc...) asparagine glycans are attached at residues Asn478, Asn528, and Asn542.

Belongs to the type-B carboxylesterase/lipase family. Expressed by the venom gland.

The protein localises to the secreted. It catalyses the reaction a carboxylic ester + H2O = an alcohol + a carboxylate + H(+). In Apis mellifera (Honeybee), this protein is Venom carboxylesterase-6.